Consider the following 146-residue polypeptide: MRVVLQRSKEASVTVDGEIVGQIPFGLTLLVGITHEDTEQDAAYIAEKIANLRIFEDENGKMNHSILDVKGQVLSISQFTLYGDCRKGRRPNFMNAAKPDYAERLYDFFNEEIRKQGLHVETGKFGAMMDVSLVNDGPVTLIVESK.

Residues 137-138 carry the Gly-cisPro motif, important for rejection of L-amino acids motif; the sequence is GP.

The protein belongs to the DTD family. Homodimer.

It localises to the cytoplasm. The enzyme catalyses glycyl-tRNA(Ala) + H2O = tRNA(Ala) + glycine + H(+). It catalyses the reaction a D-aminoacyl-tRNA + H2O = a tRNA + a D-alpha-amino acid + H(+). Functionally, an aminoacyl-tRNA editing enzyme that deacylates mischarged D-aminoacyl-tRNAs. Also deacylates mischarged glycyl-tRNA(Ala), protecting cells against glycine mischarging by AlaRS. Acts via tRNA-based rather than protein-based catalysis; rejects L-amino acids rather than detecting D-amino acids in the active site. By recycling D-aminoacyl-tRNA to D-amino acids and free tRNA molecules, this enzyme counteracts the toxicity associated with the formation of D-aminoacyl-tRNA entities in vivo and helps enforce protein L-homochirality. This chain is D-aminoacyl-tRNA deacylase, found in Bacillus cytotoxicus (strain DSM 22905 / CIP 110041 / 391-98 / NVH 391-98).